Consider the following 675-residue polypeptide: UvrABC system protein B (675 aa).

The region spanning 30-417 is the Helicase ATP-binding domain; it reads SGIEQGNRNQ…SDQIVEQVVR (388 aa). 43–50 is a binding site for ATP; it reads GVTGSGKT. Residues 96–119 carry the Beta-hairpin motif; the sequence is YYDYYQPEAYVPSSDTFIEKDAAI. One can recognise a Helicase C-terminal domain in the interval 434-601; it reads QVDDVLSEIN…AVRQKVKEID (168 aa). Positions 637 to 672 constitute a UVR domain; it reads AKHMSKLEKEMLKASKELQFEQAARLRDEILRLKAQ.

Belongs to the UvrB family. In terms of assembly, forms a heterotetramer with UvrA during the search for lesions. Interacts with UvrC in an incision complex.

The protein resides in the cytoplasm. Functionally, the UvrABC repair system catalyzes the recognition and processing of DNA lesions. A damage recognition complex composed of 2 UvrA and 2 UvrB subunits scans DNA for abnormalities. Upon binding of the UvrA(2)B(2) complex to a putative damaged site, the DNA wraps around one UvrB monomer. DNA wrap is dependent on ATP binding by UvrB and probably causes local melting of the DNA helix, facilitating insertion of UvrB beta-hairpin between the DNA strands. Then UvrB probes one DNA strand for the presence of a lesion. If a lesion is found the UvrA subunits dissociate and the UvrB-DNA preincision complex is formed. This complex is subsequently bound by UvrC and the second UvrB is released. If no lesion is found, the DNA wraps around the other UvrB subunit that will check the other stand for damage. This Acinetobacter baylyi (strain ATCC 33305 / BD413 / ADP1) protein is UvrABC system protein B.